The chain runs to 445 residues: Phosphoglucosamine mutase (445 aa).

Catalysis depends on S99, which acts as the Phosphoserine intermediate. Mg(2+)-binding residues include S99, D242, D244, and D246. S99 carries the phosphoserine modification.

The protein belongs to the phosphohexose mutase family. Mg(2+) is required as a cofactor. Activated by phosphorylation.

It carries out the reaction alpha-D-glucosamine 1-phosphate = D-glucosamine 6-phosphate. Catalyzes the conversion of glucosamine-6-phosphate to glucosamine-1-phosphate. This is Phosphoglucosamine mutase from Campylobacter jejuni subsp. jejuni serotype O:6 (strain 81116 / NCTC 11828).